Here is a 377-residue protein sequence, read N- to C-terminus: Mechanosensory abnormality protein 6 (377 aa).

Residues 1–13 are Cytoplasmic-facing; that stretch reads MGLQSAAAHFINR. The chain crosses the membrane as a helical span at residues 14–34; that stretch reads FIIWITIFMVACFLLRLLVVL. At 35–377 the chain is on the extracellular side; sequence DLNKRVYNHT…HCDLTHSYIT (343 aa). Residues C48 and C369 are joined by a disulfide bond. N-linked (GlcNAc...) asparagine glycosylation occurs at N94.

This sequence belongs to the paraoxonase family. As to quaternary structure, component of a non-voltage-gated amiloride-sensitive cation channel complex (also called the degenerin channel complex) composed of at least the mec-2, mec-4, mec-6 and mec-10 subunits; the complex mediates mechanotransduction in touch cells. Interacts with mec-2, mec-4 and mec-10. Glycosylated. Expressed in neurons including the six touch receptors, ventral cord motor neurons, HSN, PVD, PVC, IL1, and several neurons near the nerve ring, in the anal ganglion and in the male tail sensory rays, in muscles including the body wall, vulval, intestinal, anal depressor and sphincter muscles, and in the excretory canal.

The protein localises to the cell membrane. It is found in the cell projection. The protein resides in the axon. Subunit of an amiloride-sensitive cation channel (degenerin channel complex) permeable for sodium, potassium, lithium and N-methylglucamine, and required for mechanosensory transduction (touch sensitivity). Interacts with degenerin channel proteins and stabilizes the channel. Plays a role in mechanosensory transduction (touch sensitivity). The sequence is that of Mechanosensory abnormality protein 6 from Caenorhabditis elegans.